Reading from the N-terminus, the 260-residue chain is Triosephosphate isomerase (260 aa).

Position 11–13 (11–13 (NWK)) interacts with substrate. The Electrophile role is filled by histidine 103. The Proton acceptor role is filled by glutamate 175. Substrate is bound by residues glycine 181, serine 220, and 241–242 (GG).

It belongs to the triosephosphate isomerase family. Homodimer.

The protein localises to the cytoplasm. The catalysed reaction is D-glyceraldehyde 3-phosphate = dihydroxyacetone phosphate. It functions in the pathway carbohydrate biosynthesis; gluconeogenesis. Its pathway is carbohydrate degradation; glycolysis; D-glyceraldehyde 3-phosphate from glycerone phosphate: step 1/1. Its function is as follows. Involved in the gluconeogenesis. Catalyzes stereospecifically the conversion of dihydroxyacetone phosphate (DHAP) to D-glyceraldehyde-3-phosphate (G3P). The polypeptide is Triosephosphate isomerase (Shewanella pealeana (strain ATCC 700345 / ANG-SQ1)).